The primary structure comprises 84 residues: Limulin (84 aa).

Residues 6-84 form the Pentraxin (PTX) domain; the sequence is ITSKVKFPPS…DEQGDFLFNV (79 aa). 2 residues coordinate Ca(2+): Asp-67 and Asn-68.

Belongs to the pentraxin family. Homopentamer. Pentraxin (or pentaxin) have a discoid arrangement of 5 non-covalently bound subunits. It depends on Ca(2+) as a cofactor. Post-translationally, a disulfide bond links Cys-38 to a Cys in the C-terminal half of the chain of 163 residues.

Lectin that binds sialic acid. Displays antiviral activity and therefore may contribute to defense against infections. The sequence is that of Limulin from Limulus polyphemus (Atlantic horseshoe crab).